The following is a 223-amino-acid chain: Crossover junction endodeoxyribonuclease RuvC (223 aa).

Catalysis depends on residues aspartate 12, glutamate 73, and aspartate 146. The Mg(2+) site is built by aspartate 12, glutamate 73, and aspartate 146. A disordered region spans residues 182–223 (QGKLGKAKSTLNARNNAQVTGDAQVRAGHPSQFERPDRADPR). Over residues 190–202 (STLNARNNAQVTG) the composition is skewed to polar residues. The span at 213–223 (QFERPDRADPR) shows a compositional bias: basic and acidic residues.

The protein belongs to the RuvC family. In terms of assembly, homodimer which binds Holliday junction (HJ) DNA. The HJ becomes 2-fold symmetrical on binding to RuvC with unstacked arms; it has a different conformation from HJ DNA in complex with RuvA. In the full resolvosome a probable DNA-RuvA(4)-RuvB(12)-RuvC(2) complex forms which resolves the HJ. Mg(2+) serves as cofactor.

It is found in the cytoplasm. The catalysed reaction is Endonucleolytic cleavage at a junction such as a reciprocal single-stranded crossover between two homologous DNA duplexes (Holliday junction).. In terms of biological role, the RuvA-RuvB-RuvC complex processes Holliday junction (HJ) DNA during genetic recombination and DNA repair. Endonuclease that resolves HJ intermediates. Cleaves cruciform DNA by making single-stranded nicks across the HJ at symmetrical positions within the homologous arms, yielding a 5'-phosphate and a 3'-hydroxyl group; requires a central core of homology in the junction. The consensus cleavage sequence is 5'-(A/T)TT(C/G)-3'. Cleavage occurs on the 3'-side of the TT dinucleotide at the point of strand exchange. HJ branch migration catalyzed by RuvA-RuvB allows RuvC to scan DNA until it finds its consensus sequence, where it cleaves and resolves the cruciform DNA. The sequence is that of Crossover junction endodeoxyribonuclease RuvC from Corynebacterium efficiens (strain DSM 44549 / YS-314 / AJ 12310 / JCM 11189 / NBRC 100395).